We begin with the raw amino-acid sequence, 172 residues long: Protein/nucleic acid deglycase 2 (172 aa).

Residues 3-171 (KKIAVLITDE…FNREALRLLG (169 aa)) enclose the PfpI endopeptidase domain. Cys-104 serves as the catalytic Nucleophile.

It belongs to the peptidase C56 family. As to quaternary structure, exists in monomeric, trimeric, and hexameric forms.

The protein localises to the cytoplasm. The enzyme catalyses N(omega)-(1-hydroxy-2-oxopropyl)-L-arginyl-[protein] + H2O = lactate + L-arginyl-[protein] + H(+). It catalyses the reaction N(6)-(1-hydroxy-2-oxopropyl)-L-lysyl-[protein] + H2O = lactate + L-lysyl-[protein] + H(+). It carries out the reaction S-(1-hydroxy-2-oxopropyl)-L-cysteinyl-[protein] + H2O = lactate + L-cysteinyl-[protein] + H(+). The catalysed reaction is N(omega)-(1-hydroxy-2-oxoethyl)-L-arginyl-[protein] + H2O = L-arginyl-[protein] + glycolate + H(+). The enzyme catalyses N(6)-(1-hydroxy-2-oxoethyl)-L-lysyl-[protein] + H2O = glycolate + L-lysyl-[protein] + H(+). It catalyses the reaction S-(1-hydroxy-2-oxoethyl)-L-cysteinyl-[protein] + H2O = glycolate + L-cysteinyl-[protein] + H(+). It carries out the reaction N(2)-(1-hydroxy-2-oxopropyl)-dGTP + H2O = lactate + dGTP + H(+). The catalysed reaction is N(2)-(1-hydroxy-2-oxopropyl)-GTP + H2O = lactate + GTP + H(+). The enzyme catalyses N(2)-(1-hydroxy-2-oxopropyl)-GDP + H2O = lactate + GDP + H(+). It catalyses the reaction N(2)-(1-hydroxy-2-oxopropyl)-GMP + H2O = lactate + GMP + H(+). It carries out the reaction N(2)-(1-hydroxy-2-oxoethyl)-dGTP + H2O = dGTP + glycolate + H(+). The catalysed reaction is N(2)-(1-hydroxy-2-oxoethyl)-GTP + H2O = glycolate + GTP + H(+). The enzyme catalyses N(2)-(1-hydroxy-2-oxoethyl)-GDP + H2O = glycolate + GDP + H(+). It catalyses the reaction N(2)-(1-hydroxy-2-oxoethyl)-GMP + H2O = glycolate + GMP + H(+). It carries out the reaction an N(2)-(1-hydroxy-2-oxopropyl)-guanosine in RNA + H2O = a guanosine in RNA + lactate + H(+). The catalysed reaction is an N(2)-(1-hydroxy-2-oxopropyl)-2'-deoxyguanosine in DNA + H2O = a 2'-deoxyguanosine in DNA + lactate + H(+). The enzyme catalyses an N(2)-(1-hydroxy-2-oxoethyl)-guanosine in RNA + H2O = a guanosine in RNA + glycolate + H(+). It catalyses the reaction an N(2)-(1-hydroxy-2-oxoethyl)-2'-deoxyguanosine in DNA + H2O = a 2'-deoxyguanosine in DNA + glycolate + H(+). With respect to regulation, glyoxalase activity is inhibited by zinc ions at pH 7.0. Functionally, protein and nucleotide deglycase that catalyzes the deglycation of the Maillard adducts formed between amino groups of proteins or nucleotides and reactive carbonyl groups of glyoxals. Thus, functions as a protein deglycase that repairs methylglyoxal- and glyoxal-glycated proteins, and releases repaired proteins and lactate or glycolate, respectively. Deglycates cysteine, arginine and lysine residues in proteins, and thus reactivates these proteins by reversing glycation by glyoxals. Is able to repair glycated serum albumin, collagen, glyceraldehyde-3-phosphate dehydrogenase, and fructose biphosphate aldolase. Acts on early glycation intermediates (hemithioacetals and aminocarbinols), preventing the formation of advanced glycation endproducts (AGE) that cause irreversible damage. Also functions as a nucleotide deglycase able to repair glycated guanine in the free nucleotide pool (GTP, GDP, GMP, dGTP) and in DNA and RNA. Is thus involved in a major nucleotide repair system named guanine glycation repair (GG repair), dedicated to reversing methylglyoxal and glyoxal damage via nucleotide sanitization and direct nucleic acid repair. In vitro, prevents acrylamide formation in asparagine/glyoxal and asparagine/sugar mixtures at 55 degrees Celsius, likely by degrading asparagine/glyoxal Maillard adducts formed at high temperatures. Also displays an apparent glyoxalase activity that in fact reflects its deglycase activity. Is a general stress protein; is required for the protection of bacterial cells against many environmental stresses, including oxidative, thermal, osmotic, UV, and pH stresses. And plays an important role in protection against electrophile/carbonyl stress. This chain is Protein/nucleic acid deglycase 2 (yhbO), found in Escherichia coli (strain K12).